Consider the following 141-residue polypeptide: Zinc finger protein 593 homolog (141 aa).

The tract at residues 1-32 is disordered; sequence MGRYSGHGGTHTKKKQYKRARSTKNRAKDIDQ. Residues 10–25 show a composition bias toward basic residues; the sequence is THTKKKQYKRARSTKN. The C2H2-type zinc finger occupies 60 to 84; the sequence is NYCIHCSKHFVTNEDLQSHIKGKPH.

The protein belongs to the ZNF593/BUD20 C2H2-type zinc-finger protein family. Associates with pre-60S ribosomal particles; released from the pre-60S particle very early in the cytoplasm.

It localises to the nucleus. Its subcellular location is the cytoplasm. Its function is as follows. Involved in pre-60S ribosomal particles maturation by promoting the nuclear export of the 60S ribosome. This Dictyostelium discoideum (Social amoeba) protein is Zinc finger protein 593 homolog.